We begin with the raw amino-acid sequence, 431 residues long: CCA tRNA nucleotidyltransferase 1, mitochondrial (431 aa).

The transit peptide at 1-31 directs the protein to the mitochondrion; sequence MWAKLFLRPSFVNRVHLTWSCRALLTMQLKT. Positions 61 and 64 each coordinate ATP. CTP is bound by residues Gly61 and Arg64. 2 residues coordinate Mg(2+): Asp74 and Asp76. The ATP site is built by Arg148, Asp191, Arg194, Arg197, and Arg200. CTP contacts are provided by Arg148, Asp191, Arg194, Arg197, and Arg200.

It belongs to the tRNA nucleotidyltransferase/poly(A) polymerase family. As to quaternary structure, monomer, and homodimer. The cofactor is Mg(2+). In terms of tissue distribution, expressed ubiquitously during early embryogenesis.

The protein resides in the mitochondrion. Its subcellular location is the cytoplasm. It is found in the nucleus. The catalysed reaction is a tRNA precursor + 2 CTP + ATP = a tRNA with a 3' CCA end + 3 diphosphate. It carries out the reaction a tRNA with a 3' CCA end + 2 CTP + ATP = a tRNA with a 3' CCACCA end + 3 diphosphate. Its function is as follows. Nucleotidyltransferase that catalyzes the addition and repair of the essential 3'-terminal CCA sequence in tRNAs, which is necessary for the attachment of amino acids to the 3' terminus of tRNA molecules, using CTP and ATP as substrates. tRNA 3'-terminal CCA addition is required both for tRNA processing and repair. Promotes tRNA repair and recycling downstream of the ribosome-associated quality control (RQC) pathway by mediating addition of the tRNA 3'-terminal CCA following cleavage by ankzf1 and repair by elac1. Also involved in tRNA surveillance by mediating tandem CCA addition to generate a CCACCA at the 3' terminus of unstable tRNAs and tRNA-like transcripts. While stable tRNAs receive only 3'-terminal CCA, unstable tRNAs beginning with GG are marked with CCACCA and rapidly degraded. The structural flexibility of RNA controls the choice between CCA versus CCACCA addition: following the first CCA addition cycle, nucleotide-binding to the active site triggers a clockwise screw motion, producing torque on the RNA. This ejects stable RNAs, whereas unstable RNAs are refolded while bound to the enzyme and subjected to a second CCA catalytic cycle. The protein is CCA tRNA nucleotidyltransferase 1, mitochondrial of Danio rerio (Zebrafish).